Reading from the N-terminus, the 237-residue chain is Phosphoribosylaminoimidazole-succinocarboxamide synthase (237 aa).

This sequence belongs to the SAICAR synthetase family.

It carries out the reaction 5-amino-1-(5-phospho-D-ribosyl)imidazole-4-carboxylate + L-aspartate + ATP = (2S)-2-[5-amino-1-(5-phospho-beta-D-ribosyl)imidazole-4-carboxamido]succinate + ADP + phosphate + 2 H(+). Its pathway is purine metabolism; IMP biosynthesis via de novo pathway; 5-amino-1-(5-phospho-D-ribosyl)imidazole-4-carboxamide from 5-amino-1-(5-phospho-D-ribosyl)imidazole-4-carboxylate: step 1/2. This is Phosphoribosylaminoimidazole-succinocarboxamide synthase from Cronobacter sakazakii (strain ATCC BAA-894) (Enterobacter sakazakii).